Consider the following 241-residue polypeptide: MRLKLSLTPKQDFSFDKINKHTIQGFIYSLLKDTEFGEMHNQPRFKFWCFSDIFPPNDFVKGEDKYLLISSPREEFINVLYERLDNLEEVNLNNFKFEVSELKKFDLKVKNKFITGSPIVLYKDKDRGEYIKFYDDDFDLMFFVQRLQDNAVKKYKAFYNEEPVLNGFIFDRISPRVRNGRVDVYVRIAKKGREFLVVGTTWKLLEKIKIRKEERKFYKFIMDCGLGEKNSLGFGFINPIK.

Residue Y28 is the Proton acceptor of the active site. The active-site Proton donor is H40.

Belongs to the CRISPR-associated protein Cas6/Cse3/CasE family.

Functionally, CRISPR (clustered regularly interspaced short palindromic repeat) is an adaptive immune system that provides protection against mobile genetic elements (viruses, transposable elements and conjugative plasmids). CRISPR clusters contain sequences complementary to antecedent mobile elements and target invading nucleic acids. CRISPR clusters are transcribed and processed into CRISPR RNA (crRNA). This protein processes pre-crRNA into individual crRNA units. This Methanocaldococcus jannaschii (strain ATCC 43067 / DSM 2661 / JAL-1 / JCM 10045 / NBRC 100440) (Methanococcus jannaschii) protein is CRISPR-associated endoribonuclease Cas6 2 (cas6b).